The chain runs to 251 residues: 5'-nucleotidase SurE (251 aa).

4 residues coordinate a divalent metal cation: Asp8, Asp9, Ser39, and Asn90.

It belongs to the SurE nucleotidase family. Requires a divalent metal cation as cofactor.

The protein localises to the cytoplasm. The enzyme catalyses a ribonucleoside 5'-phosphate + H2O = a ribonucleoside + phosphate. Functionally, nucleotidase that shows phosphatase activity on nucleoside 5'-monophosphates. This Colwellia psychrerythraea (strain 34H / ATCC BAA-681) (Vibrio psychroerythus) protein is 5'-nucleotidase SurE.